We begin with the raw amino-acid sequence, 360 residues long: Peptide chain release factor 1 (360 aa).

At Gln-233 the chain carries N5-methylglutamine. The segment at 283 to 305 (KLDAERAADRRSQVGSGDRSERI) is disordered.

Belongs to the prokaryotic/mitochondrial release factor family. In terms of processing, methylated by PrmC. Methylation increases the termination efficiency of RF1.

Its subcellular location is the cytoplasm. Functionally, peptide chain release factor 1 directs the termination of translation in response to the peptide chain termination codons UAG and UAA. The protein is Peptide chain release factor 1 of Methylocella silvestris (strain DSM 15510 / CIP 108128 / LMG 27833 / NCIMB 13906 / BL2).